Here is a 526-residue protein sequence, read N- to C-terminus: MTKLSLLPLLALASAVLAKQDAFQAKCASFGHRIKLPNVHVNFVEYVPGGTNLTLPDNHVTCGASSQIVSADMCRVAMAVDTSKSSQITLEAWFPRNYTGRFLSTGNGGLSGCIQYYDLAYTAGLGFATVGANNGHNGTSGKPFYQHPEVIEDFAYRSIHTGVVVGKQLIKMFYSEGFDKSYYLGCSTGGRQGFKSIQKYPNDFDGVVAGAPAFNFVNLISWSIHFYSITGSNTSDTYLSPASWKVVHDEIVRQCDGIDGAKDGIIEDTDLCHPILETIICKPGASSTTNCITGTQAKTVRNVLSPFYGVNGTLLYPRMQPGSELFASSIMYNGQPFSYSTDWYRYVVYNNPNWDATKWTVEDAAVALAQNPYNIQTWDADISSFQKAGGKVLTYHGIQDQLISSDNSKLYYARVAETMGLGPEELDDFYRFFPVSGMAHCSGGDGAYGIGNGLRTYNGAEPENNVLMAMVQWVEKGVAPEFIRGAKFSNGVGSPVEYTRKHCKYPRRNVYKGPGNYSDENAWECV.

The signal sequence occupies residues 1–18 (MTKLSLLPLLALASAVLA). Disulfide bonds link Cys-27–Cys-74 and Cys-62–Cys-113. Asn-52, Asn-97, and Asn-137 each carry an N-linked (GlcNAc...) asparagine glycan. 4 disulfide bridges follow: Cys-186-Cys-441, Cys-255-Cys-272, Cys-281-Cys-291, and Cys-503-Cys-525. Ser-187 serves as the catalytic Acyl-ester intermediate. A glycan (N-linked (GlcNAc...) asparagine) is linked at Asn-233. 5 residues coordinate Ca(2+): Asp-256, Asp-259, Ala-261, Asp-263, and Ile-265. Asn-311 carries N-linked (GlcNAc...) asparagine glycosylation. Residues Asp-400 and His-440 each act as charge relay system in the active site. A glycan (N-linked (GlcNAc...) asparagine) is linked at Asn-516.

The protein belongs to the tannase family.

The protein resides in the secreted. It carries out the reaction feruloyl-polysaccharide + H2O = ferulate + polysaccharide.. In terms of biological role, involved in degradation of plant cell walls. Hydrolyzes the feruloyl-arabinose ester bond in arabinoxylans as well as the feruloyl-galactose and feruloyl-arabinose ester bonds in pectin. This Neosartorya fischeri (strain ATCC 1020 / DSM 3700 / CBS 544.65 / FGSC A1164 / JCM 1740 / NRRL 181 / WB 181) (Aspergillus fischerianus) protein is Probable feruloyl esterase B-2 (faeB-2).